A 695-amino-acid chain; its full sequence is Follicle-stimulating hormone receptor (695 aa).

The N-terminal stretch at 1 to 17 is a signal peptide; it reads MALLLVALLAFLSLGSG. 2 cysteine pairs are disulfide-bonded: C18-C25 and C23-C32. The 29-residue stretch at 18–46 folds into the LRRNT domain; sequence CHHRLCHCSNGVFLCQESKVTEIPSDLPR. Residues 18–366 are Extracellular-facing; it reads CHHRLCHCSN…EDIMGDDILR (349 aa). LRR repeat units follow at residues 49–72, 73–97, 98–118, 119–143, 144–169, 170–192, 193–216, 217–240, and 241–259; these read VELR…FGDL, EKIE…LPKL, HEIR…AFQN, LPNL…KIQS, LQKV…MGLS, FESM…AFNG, TQLD…VFQG, ASGP…GLEN, and LKKL…PSLE. N191 and N199 each carry an N-linked (GlcNAc...) asparagine glycan. 4 disulfide bridges follow: C275–C346, C276–C292, C276–C356, and C292–C338. The N-linked (GlcNAc...) asparagine glycan is linked to N293. At Y335 the chain carries Sulfotyrosine. Residues 367-387 traverse the membrane as a helical segment; sequence VLIWFISILAITGNILVLVIL. At 388 to 398 the chain is on the cytoplasmic side; it reads ITSQYKLTVPR. A helical membrane pass occupies residues 399-421; that stretch reads FLMCNLAFADLCIGIYLLLIASV. Over 422-443 the chain is Extracellular; sequence DVHTKTEYHNYAIDWQTGAGCD. A disulfide bridge links C442 with C517. Residues 444–465 traverse the membrane as a helical segment; sequence AAGFFTVFASELSVYTLTAITL. Over 466-485 the chain is Cytoplasmic; it reads ERWHTITHAMQLECKVQLRH. The chain crosses the membrane as a helical span at residues 486–508; sequence AASIMLVGWIFAFAVALFPIFGI. Over 509–528 the chain is Extracellular; that stretch reads SSYMKVSICLPMDIDSPLSQ. A helical membrane pass occupies residues 529-550; it reads LYVMSLLVLNVLAFVVICGCYT. At 551-573 the chain is on the cytoplasmic side; that stretch reads HIYLTVRNPNITSSSSDTKIAKR. The chain crosses the membrane as a helical span at residues 574–597; sequence MAMLIFTDFLCMAPISFFAISASL. Over 598 to 608 the chain is Extracellular; that stretch reads KVPLITVSKSK. A helical membrane pass occupies residues 609–630; it reads ILLVLFYPINSCANPFLYAIFT. Residues 631–695 lie on the Cytoplasmic side of the membrane; it reads KNFRRDFFIL…LIPLRHLAKN (65 aa).

This sequence belongs to the G-protein coupled receptor 1 family. FSH/LSH/TSH subfamily. Homotrimer. Functions as a homotrimer binding the FSH hormone heterodimer composed of CGA and FSHB. Interacts with ARRB2. Interacts with APPL2; interaction is independent of follicle stimulating hormone stimulation. Post-translationally, N-glycosylated; indirectly required for FSH-binding, possibly via a conformational change that allows high affinity binding of hormone. In terms of processing, sulfated.

It localises to the cell membrane. Its function is as follows. G protein-coupled receptor for follitropin, the follicle-stimulating hormone. Through cAMP production activates the downstream PI3K-AKT and ERK1/ERK2 signaling pathways. This Bos taurus (Bovine) protein is Follicle-stimulating hormone receptor (FSHR).